The chain runs to 433 residues: Tol-Pal system protein TolB (433 aa).

The N-terminal stretch at 1–21 (MIKRLRGLLVMLCCVAGMAVA) is a signal peptide.

It belongs to the TolB family. The Tol-Pal system is composed of five core proteins: the inner membrane proteins TolA, TolQ and TolR, the periplasmic protein TolB and the outer membrane protein Pal. They form a network linking the inner and outer membranes and the peptidoglycan layer.

It localises to the periplasm. Its function is as follows. Part of the Tol-Pal system, which plays a role in outer membrane invagination during cell division and is important for maintaining outer membrane integrity. The sequence is that of Tol-Pal system protein TolB from Pseudomonas putida (strain ATCC 47054 / DSM 6125 / CFBP 8728 / NCIMB 11950 / KT2440).